A 274-amino-acid polypeptide reads, in one-letter code: MAIHLYKTSTPSTRNGAVDSQVKSNPRNNLICGQHHCGKGRNARGIITVRHRGGGHKRLYRKIDFRRNAKDIYGRIVTIEYDPNRNAYICLIHYGDGEKRYILHPRGAIIGDTIVSGTEVPIKMGNALPLTDMPLGTAIHNIEITLGKGGQLARAAGAVAKLIAKEGKSATLKLPSGEVRLISKNCSATVGQVGNVGVNQKSLGRAGSKCWLGKRPVVRGVVMNPVDHPHGGGEGRAPIGRKKPVTPWGYPALGRRTRKRKKYSETLILRRRSK.

2 disordered regions span residues 1–21 and 225–254; these read MAIH…VDSQ and PVDH…PALG.

The protein belongs to the universal ribosomal protein uL2 family. In terms of assembly, part of the 50S ribosomal subunit.

It localises to the plastid. The protein resides in the chloroplast. This chain is Large ribosomal subunit protein uL2cz/uL2cy (rpl2-A), found in Draba nemorosa (Woodland whitlowgrass).